Reading from the N-terminus, the 511-residue chain is Steroid 17-alpha-hydroxylase/17,20 lyase (511 aa).

Position 442 (cysteine 442) interacts with heme.

The protein belongs to the cytochrome P450 family. Requires heme as cofactor.

It is found in the endoplasmic reticulum membrane. It localises to the microsome membrane. The catalysed reaction is a C21-steroid + reduced [NADPH--hemoprotein reductase] + O2 = a 17alpha-hydroxy-C21-steroid + oxidized [NADPH--hemoprotein reductase] + H2O + H(+). It catalyses the reaction progesterone + reduced [NADPH--hemoprotein reductase] + O2 = 17alpha-hydroxyprogesterone + oxidized [NADPH--hemoprotein reductase] + H2O + H(+). The enzyme catalyses pregnenolone + reduced [NADPH--hemoprotein reductase] + O2 = 17alpha-hydroxypregnenolone + oxidized [NADPH--hemoprotein reductase] + H2O + H(+). It carries out the reaction 17alpha-hydroxyprogesterone + reduced [NADPH--hemoprotein reductase] + O2 = androst-4-ene-3,17-dione + acetate + oxidized [NADPH--hemoprotein reductase] + H2O + 2 H(+). The catalysed reaction is 17alpha-hydroxyprogesterone + reduced [NADPH--hemoprotein reductase] + O2 = 16alpha,17alpha-dihydroxyprogesterone + oxidized [NADPH--hemoprotein reductase] + H2O + H(+). It catalyses the reaction 16alpha,17alpha-dihydroxyprogesterone + reduced [NADPH--hemoprotein reductase] + O2 = 6beta,16alpha,17alpha-trihydroxyprogesterone + oxidized [NADPH--hemoprotein reductase] + H2O + H(+). The enzyme catalyses 17alpha-hydroxypregnenolone + reduced [NADPH--hemoprotein reductase] + O2 = 3beta-hydroxyandrost-5-en-17-one + acetate + oxidized [NADPH--hemoprotein reductase] + H2O + 2 H(+). It carries out the reaction 16alpha,17alpha-dihydroxypregnenolone + reduced [NADPH--hemoprotein reductase] + O2 = 3beta,16alpha-dihydroxy-androst-5-en-17-one + acetate + oxidized [NADPH--hemoprotein reductase] + H2O + 2 H(+). The catalysed reaction is 3beta-hydroxyandrost-5-en-17-one + reduced [NADPH--hemoprotein reductase] + O2 = 3beta,16alpha-dihydroxy-androst-5-en-17-one + oxidized [NADPH--hemoprotein reductase] + H2O + H(+). It catalyses the reaction androst-4-ene-3,17-dione + reduced [NADPH--hemoprotein reductase] + O2 = 16alpha-hydroxyandrost-4-ene-3,17-dione + oxidized [NADPH--hemoprotein reductase] + H2O + H(+). The protein operates within steroid hormone biosynthesis. It participates in steroid biosynthesis; glucocorticoid biosynthesis. With respect to regulation, regulated predominantly by intracellular cAMP levels. The 17,20-lyase activity is stimulated by cytochrome b5, which acts as an allosteric effector increasing the Vmax of the lyase activity. In terms of biological role, a cytochrome P450 monooxygenase involved in corticoid and androgen biosynthesis. Catalyzes 17-alpha hydroxylation of C21 steroids, which is common for both pathways. A second oxidative step, required only for androgen synthesis, involves an acyl-carbon cleavage. The 17-alpha hydroxy intermediates, as part of adrenal glucocorticoids biosynthesis pathway, are precursors of cortisol. Hydroxylates steroid hormones, pregnenolone and progesterone to form 17-alpha hydroxy metabolites, followed by the cleavage of the C17-C20 bond to form C19 steroids, dehydroepiandrosterone (DHEA) and androstenedione. Has 16-alpha hydroxylase activity. Catalyzes 16-alpha hydroxylation of 17-alpha hydroxy pregnenolone, followed by the cleavage of the C17-C20 bond to form 16-alpha-hydroxy DHEA. Also 16-alpha hydroxylates androgens, relevant for estriol synthesis. Mechanistically, uses molecular oxygen inserting one oxygen atom into a substrate, and reducing the second into a water molecule, with two electrons provided by NADPH via cytochrome P450 reductase (CPR; NADPH-ferrihemoprotein reductase). The chain is Steroid 17-alpha-hydroxylase/17,20 lyase (CYP17A1) from Mesocricetus auratus (Golden hamster).